Here is a 177-residue protein sequence, read N- to C-terminus: MSRVAKAPVTIPAGVEVTLNEQTLTVKGSKGSLTRVINSAVNVVIEDAQVKFLPVEGVDGAWAQAGTARALVNNMVVGVSQGFVKKLKLVGVGYRAKIAGSDLDLTLGFSHPLVHKLPAGVTAECPSQTEIVLSGVDKQLIGQVAAEIRGYRPPEPYKGKGVRYDDEVVRRKEAKKK.

It belongs to the universal ribosomal protein uL6 family. In terms of assembly, part of the 50S ribosomal subunit.

This protein binds to the 23S rRNA, and is important in its secondary structure. It is located near the subunit interface in the base of the L7/L12 stalk, and near the tRNA binding site of the peptidyltransferase center. The protein is Large ribosomal subunit protein uL6 of Shewanella denitrificans (strain OS217 / ATCC BAA-1090 / DSM 15013).